A 470-amino-acid chain; its full sequence is Serine carboxypeptidase ctsa-4.1 (470 aa).

The first 19 residues, 1-19 (MKLLSILFIFVSSYSFCLA), serve as a signal peptide directing secretion. Residue N132 is glycosylated (N-linked (GlcNAc...) asparagine). S169 is a catalytic residue. N316 carries N-linked (GlcNAc...) asparagine glycosylation. D380 is an active-site residue. N-linked (GlcNAc...) asparagine glycosylation is present at N396. H441 is a catalytic residue.

It belongs to the peptidase S10 family.

The catalysed reaction is Release of a C-terminal amino acid with broad specificity.. The polypeptide is Serine carboxypeptidase ctsa-4.1 (Caenorhabditis elegans).